The primary structure comprises 242 residues: Dihydropteridine reductase (242 aa).

12–36 serves as a coordination point for NADP(+); sequence LVYGGRGALGSRCVQAFRARNWWVA. N6-succinyllysine occurs at positions 71, 77, 94, and 100. The active-site Proton acceptor is the Tyr-148.

Belongs to the short-chain dehydrogenases/reductases (SDR) family. In terms of assembly, homodimer.

It carries out the reaction 5,6,7,8-tetrahydropteridine + NAD(+) = 6,7-dihydropteridine + NADH + H(+). The catalysed reaction is 5,6,7,8-tetrahydropteridine + NADP(+) = 6,7-dihydropteridine + NADPH + H(+). In terms of biological role, catalyzes the conversion of quinonoid dihydrobiopterin into tetrahydrobiopterin. This chain is Dihydropteridine reductase (QDPR), found in Bos taurus (Bovine).